The sequence spans 568 residues: Glucose-6-phosphate isomerase, cytosolic 1 (568 aa).

The active-site Proton donor is Glu-360. Residues His-391 and Lys-516 contribute to the active site.

It belongs to the GPI family. Homodimer.

It localises to the cytoplasm. It catalyses the reaction alpha-D-glucose 6-phosphate = beta-D-fructose 6-phosphate. It participates in carbohydrate degradation; glycolysis; D-glyceraldehyde 3-phosphate and glycerone phosphate from D-glucose: step 2/4. The polypeptide is Glucose-6-phosphate isomerase, cytosolic 1 (PGIC1) (Clarkia williamsonii).